Here is a 182-residue protein sequence, read N- to C-terminus: Type-1 fimbrial protein, A chain (182 aa).

The N-terminal stretch at 1–23 (MKIKTLAIVVLSALSLSSTAALA) is a signal peptide. A disulfide bridge links cysteine 44 with cysteine 84.

The protein belongs to the fimbrial protein family.

It localises to the fimbrium. Functionally, fimbriae (also called pili), polar filaments radiating from the surface of the bacterium to a length of 0.5-1.5 micrometers and numbering 100-300 per cell, enable bacteria to colonize the epithelium of specific host organs. This is Type-1 fimbrial protein, A chain (fimA) from Escherichia coli (strain K12).